The primary structure comprises 120 residues: Crustacean hyperglycemic hormones 1 (120 aa).

The first 24 residues, 1-24, serve as a signal peptide directing secretion; the sequence is MIAFRAVWSALLASLLLLLLAPSA. Intrachain disulfides connect C53–C89, C69–C85, and C72–C98. V118 bears the Valine amide mark.

It belongs to the arthropod CHH/MIH/GIH/VIH hormone family. As to expression, produced by the medulla terminalis X-organ in the eyestalks and transported to the sinus gland where they are stored and released.

Its subcellular location is the secreted. Hormone found in the sinus gland of isopods and decapods which controls the blood sugar level. Has a secretagogue action over the amylase released from the midgut gland. May act as a stress hormone and may be involved in the control of molting and reproduction. This Penaeus japonicus (Kuruma prawn) protein is Crustacean hyperglycemic hormones 1.